The chain runs to 272 residues: Hydroxyacylglutathione hydrolase (272 aa).

The Zn(2+) site is built by histidine 62, histidine 64, aspartate 66, histidine 67, histidine 126, aspartate 146, and histidine 184.

Belongs to the metallo-beta-lactamase superfamily. Glyoxalase II family. As to quaternary structure, monomer. Zn(2+) is required as a cofactor.

The enzyme catalyses an S-(2-hydroxyacyl)glutathione + H2O = a 2-hydroxy carboxylate + glutathione + H(+). It functions in the pathway secondary metabolite metabolism; methylglyoxal degradation; (R)-lactate from methylglyoxal: step 2/2. Thiolesterase that catalyzes the hydrolysis of S-D-lactoyl-glutathione to form glutathione and D-lactic acid. The polypeptide is Hydroxyacylglutathione hydrolase (Saccharophagus degradans (strain 2-40 / ATCC 43961 / DSM 17024)).